Here is a 348-residue protein sequence, read N- to C-terminus: Oxidase ucsJ (348 aa).

The protein belongs to the avfA family.

Its pathway is mycotoxin biosynthesis. Its function is as follows. Oxidase; part of the gene cluster that mediates the biosynthesis of UCS1025A, a member of the pyrrolizidinone family that acts as a strong telomerase inhibitor and displays potent antibacterial and antitumor properties. These compounds share a hemiaminal-containing pyrrolizidinone core fused with a gamma-lactone, giving a furopyrrolizidine that is connected to a decalin fragment. The polyketide synthase module (PKS) of the PKS-NRPS ucsA is responsible for the synthesis of the polyketide backbone via the condensation of an acetyl-CoA starter unit with 6 malonyl-CoA units. The downstream nonribosomal peptide synthetase (NRPS) module then amidates the carboxyl end of the polyketide with a 2S,3S-methylproline derived from L-isoleucine by the 2-oxoglutarate-dependent dioxygenase ucsF which converts L-isoleucine to (4S,5S)-4-methylpyrroline-5-carboxylate that is further converted to 2S,3S-methylproline by the pyrroline-5-carboxylate reductase ucsG. Reductive release of the completed aminoacyl polyketide from the assembly line can form the 3-pyrrolin-2-one structure via an intramolecular Knoevenagel reaction. Because ucsA lacks a designated enoylreductase (ER) domain, the required activity is provided the enoyl reductase ucsL. This keto acyclic precursor is the substrate of the Diels-Alderase ucsH, that catalyzes the Diels-Alder cycloaddition. Oxidation of the 3S-methyl group to a carboxylate by the cytochrome P450 monooxygenase ucsK allows an oxa-Michael cyclization that might involve the reductase/dehydrogenase ucsI and which furnishes the furopyrrolizidine. The oxidase ucsJ likely plays a critical role in stereoselective reduction of the C5-C6 double bond to afford the required R-configured carboxylate group. Further enolization and oxidation at C5 by an unidentified enzyme affords the last intermediate that can undergo oxa-Michael cyclization to yield UCS1025A. The protein is Oxidase ucsJ of Acremonium sp.